A 250-amino-acid chain; its full sequence is Eukaryotic translation initiation factor 3 subunit K (250 aa).

Residues 54-235 (YDLFGNLAIL…DVKAGVVKEN (182 aa)) enclose the PCI domain.

Belongs to the eIF-3 subunit K family. In terms of assembly, component of the eukaryotic translation initiation factor 3 (eIF-3) complex.

The protein resides in the cytoplasm. Its function is as follows. Component of the eukaryotic translation initiation factor 3 (eIF-3) complex, which is involved in protein synthesis of a specialized repertoire of mRNAs and, together with other initiation factors, stimulates binding of mRNA and methionyl-tRNAi to the 40S ribosome. The eIF-3 complex specifically targets and initiates translation of a subset of mRNAs involved in cell proliferation. The polypeptide is Eukaryotic translation initiation factor 3 subunit K (Cryptococcus neoformans var. neoformans serotype D (strain B-3501A) (Filobasidiella neoformans)).